A 333-amino-acid polypeptide reads, in one-letter code: Transcription initiation factor IIB (333 aa).

The TFIIB-type zinc finger occupies 33–64; sequence EIYRCPICGNDRFVYNYERGEVVCIVCGAVVQ. Zn(2+) is bound by residues cysteine 37, cysteine 40, cysteine 56, and cysteine 59. Repeat copies occupy residues 149 to 232 and 243 to 324.

Belongs to the TFIIB family.

Functionally, stabilizes TBP binding to an archaeal box-A promoter. Also responsible for recruiting RNA polymerase II to the pre-initiation complex (DNA-TBP-TFIIB). This is Transcription initiation factor IIB from Pyrobaculum arsenaticum (strain DSM 13514 / JCM 11321 / PZ6).